Consider the following 240-residue polypeptide: Proteasome subunit alpha (240 aa).

It belongs to the peptidase T1A family. In terms of assembly, the 20S proteasome core is composed of 14 alpha and 14 beta subunits that assemble into four stacked heptameric rings, resulting in a barrel-shaped structure. The two inner rings, each composed of seven catalytic beta subunits, are sandwiched by two outer rings, each composed of seven alpha subunits. The catalytic chamber with the active sites is on the inside of the barrel. Has a gated structure, the ends of the cylinder being occluded by the N-termini of the alpha-subunits. Is capped at one or both ends by the proteasome regulatory ATPase, PAN.

Its subcellular location is the cytoplasm. The formation of the proteasomal ATPase PAN-20S proteasome complex, via the docking of the C-termini of PAN into the intersubunit pockets in the alpha-rings, triggers opening of the gate for substrate entry. Interconversion between the open-gate and close-gate conformations leads to a dynamic regulation of the 20S proteasome proteolysis activity. Functionally, component of the proteasome core, a large protease complex with broad specificity involved in protein degradation. This chain is Proteasome subunit alpha, found in Metallosphaera sedula (strain ATCC 51363 / DSM 5348 / JCM 9185 / NBRC 15509 / TH2).